Consider the following 476-residue polypeptide: Glutamyl-tRNA(Gln) amidotransferase subunit A (476 aa).

Catalysis depends on charge relay system residues Lys69 and Ser144. Catalysis depends on Ser168, which acts as the Acyl-ester intermediate.

It belongs to the amidase family. GatA subfamily. As to quaternary structure, heterotrimer of A, B and C subunits.

The enzyme catalyses L-glutamyl-tRNA(Gln) + L-glutamine + ATP + H2O = L-glutaminyl-tRNA(Gln) + L-glutamate + ADP + phosphate + H(+). Its function is as follows. Allows the formation of correctly charged Gln-tRNA(Gln) through the transamidation of misacylated Glu-tRNA(Gln) in organisms which lack glutaminyl-tRNA synthetase. The reaction takes place in the presence of glutamine and ATP through an activated gamma-phospho-Glu-tRNA(Gln). The protein is Glutamyl-tRNA(Gln) amidotransferase subunit A of Sulfolobus acidocaldarius (strain ATCC 33909 / DSM 639 / JCM 8929 / NBRC 15157 / NCIMB 11770).